The chain runs to 470 residues: PTS system trehalose-specific EIIBC component (470 aa).

One can recognise a PTS EIIB type-1 domain in the interval 1-88 (MGELNKSARQ…VKETGIGEST (88 aa)). Cys27 functions as the Phosphocysteine intermediate; for EIIB activity in the catalytic mechanism. The residue at position 27 (Cys27) is a Phosphocysteine; by EIIA. The 363-residue stretch at 108–470 (KTLADIFIPI…TYAYARFKHK (363 aa)) folds into the PTS EIIC type-1 domain. 10 consecutive transmembrane segments (helical) span residues 110–130 (LADI…LMGI), 160–180 (INLI…WSAV), 183–203 (FGGN…PDLL), 234–254 (GQVL…VFLT), 263–283 (LLVV…IIIG), 301–321 (FGSF…ALVI), 326–346 (HTFL…TFLW), 347–367 (PMLA…MFIV), 403–423 (FIIA…QGVL), and 443–463 (WGAF…GTYA).

The protein resides in the cell membrane. It carries out the reaction alpha,alpha-trehalose(out) + N(pros)-phospho-L-histidyl-[protein] = alpha,alpha-trehalose 6-phosphate(in) + L-histidyl-[protein]. Functionally, the phosphoenolpyruvate-dependent sugar phosphotransferase system (sugar PTS), a major carbohydrate active transport system, catalyzes the phosphorylation of incoming sugar substrates concomitantly with their translocation across the cell membrane. This system is involved in trehalose transport. This chain is PTS system trehalose-specific EIIBC component (treP), found in Bacillus subtilis (strain 168).